The sequence spans 160 residues: Dihydrofolate reductase (160 aa).

One can recognise a DHFR domain in the interval 1-160 (MLIAIWAMTQ…NVNYYRKKQQ (160 aa)). 5 to 7 (IWA) is a substrate binding site. NADP(+) contacts are provided by residues 6-7 (WA) and 14-19 (IGNNNT). Residue glutamate 27 participates in substrate binding. NADP(+) is bound at residue 43-46 (GRKT). Arginine 57 contacts substrate. NADP(+) is bound by residues 62-65 (LSKD) and 101-106 (CGGKSV). Serine 120 provides a ligand contact to substrate.

The protein belongs to the dihydrofolate reductase family.

The catalysed reaction is (6S)-5,6,7,8-tetrahydrofolate + NADP(+) = 7,8-dihydrofolate + NADPH + H(+). The protein operates within cofactor biosynthesis; tetrahydrofolate biosynthesis; 5,6,7,8-tetrahydrofolate from 7,8-dihydrofolate: step 1/1. Its function is as follows. Key enzyme in folate metabolism. Catalyzes an essential reaction for de novo glycine and purine synthesis, and for DNA precursor synthesis. This Mycoplasma genitalium (strain ATCC 33530 / DSM 19775 / NCTC 10195 / G37) (Mycoplasmoides genitalium) protein is Dihydrofolate reductase (folA).